Reading from the N-terminus, the 382-residue chain is MKITKITTYRLPPRWMFLKIETDEGVVGWGEPVIEGRARTVEAAVHELSDYLIGQDPSRINDLWQVMYRAGFYRGGPILMSAIAGIDQALWDIKGKVLNAPVWQLMGGLVRDKIKAYSWVGGDRPADVIDGIKTLREIGFDTFKLNGCEELGLIDNSRAVDAAVNTVAQIREAFGNQIEFGLDFHGRVSAPMAKVLIKELEPYRPLFIEEPVLAEQAEYYPKLAAQTHIPLAAGERMFSRFDFKRVLEAGGISILQPDLSHAGGITECYKIAGMAEAYDVTLAPHCPLGPIALAACLHIDFVSYNAVLQEQSMGIHYNKGAELLDFVKNKEDFSMAGGFFKPLTKPGLGVEIDEAKVIEFSKNAPDWRNPLWRHEDNSVAEW.

D183 provides a ligand contact to Mg(2+). H185 (proton donor) is an active-site residue. Positions 209 and 235 each coordinate Mg(2+). The Proton acceptor role is filled by H285.

Belongs to the mandelate racemase/muconate lactonizing enzyme family. GalD subfamily. Mg(2+) is required as a cofactor.

The catalysed reaction is D-galactonate = 2-dehydro-3-deoxy-D-galactonate + H2O. It participates in carbohydrate acid metabolism; D-galactonate degradation; D-glyceraldehyde 3-phosphate and pyruvate from D-galactonate: step 1/3. Catalyzes the dehydration of D-galactonate to 2-keto-3-deoxy-D-galactonate. The protein is D-galactonate dehydratase of Escherichia coli (strain UTI89 / UPEC).